A 313-amino-acid polypeptide reads, in one-letter code: Glutathionyl-hydroquinone reductase PcpF (313 aa).

The active-site Nucleophile is the Cys53. Glutathione-binding positions include Trp86, 119 to 122 (RVTI), and 137 to 138 (ES). Residues 161–285 (PAEFRPEIDR…INLRHAKAHY (125 aa)) enclose the GST C-terminal domain. Tyr184 serves as the catalytic Proton donor/acceptor.

It belongs to the GST superfamily. Xi-class GSH transferase family. As to quaternary structure, homodimer.

The enzyme catalyses 2-(glutathione-S-yl)-hydroquinone + glutathione = hydroquinone + glutathione disulfide. Functionally, catalyzes glutathione (GSH)-dependent reduction of glutathionyl-hydroquinones (GS-HQs) to the corresponding hydroquinones. Can act on halogenated substrates such as GS-2,6-dichloro-p-hydroquinone (GS-DiCH) and GS-trichloro-p-hydroquinone (GS-TriCH). Involved in the degradation of pentachlorophenol (PCP), a toxic pollutant. The sequence is that of Glutathionyl-hydroquinone reductase PcpF from Sphingobium chlorophenolicum.